Reading from the N-terminus, the 299-residue chain is Oxygen-dependent coproporphyrinogen-III oxidase (299 aa).

Ser92 provides a ligand contact to substrate. Positions 96 and 106 each coordinate a divalent metal cation. His106 serves as the catalytic Proton donor. Residue 108-110 (NVR) coordinates substrate. 2 residues coordinate a divalent metal cation: His145 and His175. Positions 239–274 (YVEFNLVYDRGTLFGLQSGGRAESILMSLPPQVRWE) are important for dimerization. Position 257 to 259 (257 to 259 (GGR)) interacts with substrate.

The protein belongs to the aerobic coproporphyrinogen-III oxidase family. As to quaternary structure, homodimer. A divalent metal cation serves as cofactor.

Its subcellular location is the cytoplasm. It catalyses the reaction coproporphyrinogen III + O2 + 2 H(+) = protoporphyrinogen IX + 2 CO2 + 2 H2O. The protein operates within porphyrin-containing compound metabolism; protoporphyrin-IX biosynthesis; protoporphyrinogen-IX from coproporphyrinogen-III (O2 route): step 1/1. In terms of biological role, involved in the heme biosynthesis. Catalyzes the aerobic oxidative decarboxylation of propionate groups of rings A and B of coproporphyrinogen-III to yield the vinyl groups in protoporphyrinogen-IX. The sequence is that of Oxygen-dependent coproporphyrinogen-III oxidase from Xanthomonas campestris pv. campestris (strain 8004).